Reading from the N-terminus, the 470-residue chain is Asparagine--tRNA ligase (470 aa).

Belongs to the class-II aminoacyl-tRNA synthetase family. As to quaternary structure, homodimer.

The protein resides in the cytoplasm. The enzyme catalyses tRNA(Asn) + L-asparagine + ATP = L-asparaginyl-tRNA(Asn) + AMP + diphosphate + H(+). This Blochmanniella floridana protein is Asparagine--tRNA ligase.